A 1423-amino-acid chain; its full sequence is Guanine nucleotide exchange factor subunit RIC1 (1423 aa).

WD repeat units follow at residues 64–103 (TQFG…GDKY) and 304–343 (NKTG…LICT). Positions 437–448 (ASQTQNPRSSST) are enriched in polar residues. The segment at 437-463 (ASQTQNPRSSSTHSEHKPSREKSPFAD) is disordered. A compositionally biased stretch (basic and acidic residues) spans 449–460 (HSEHKPSREKSP). Phosphothreonine is present on residues T992 and T996. A phosphoserine mark is found at S1015, S1017, S1019, S1037, and S1172. The interval 1355–1423 (PDAFQPITMG…QDGTYDCSVS (69 aa)) is disordered. Polar residues predominate over residues 1379–1397 (GSSSHGSIPQGEVGSSNMV). Residues 1404–1413 (TAQAEEEEPF) are compositionally biased toward acidic residues.

This sequence belongs to the RIC1 family. In terms of assembly, forms a complex with RGP1; the interaction enhances RAB6A GTPase activity. Interacts (via central domain) with RGP1. Interacts with RAB6A; the interaction is direct with a preference for RAB6A-GDP. Interacts (via C-terminus domain) with RAB33B; the interaction is direct with a preference for RAB33B-GTP. Interacts with GJA1. In terms of tissue distribution, present in kidney and various cell lines (at protein level). Widely expressed at low level.

The protein resides in the cytoplasm. The protein localises to the cytosol. It localises to the membrane. The RIC1-RGP1 complex acts as a guanine nucleotide exchange factor (GEF), which activates RAB6A by exchanging bound GDP for free GTP, and may thereby be required for efficient fusion of endosome-derived vesicles with the Golgi compartment. The RIC1-RGP1 complex participates in the recycling of mannose-6-phosphate receptors. Required for phosphorylation and localization of GJA1. Is a regulator of procollagen transport and secretion, and is required for correct cartilage morphogenesis and development of the craniofacial skeleton. The polypeptide is Guanine nucleotide exchange factor subunit RIC1 (Homo sapiens (Human)).